Reading from the N-terminus, the 92-residue chain is Progonadoliberin-1 (92 aa).

Residues 1–23 (MELVPKFLAGLILLTLCVGGCYA) form the signal peptide. Residue Gln-24 is modified to Pyrrolidone carboxylic acid. Residue Gly-33 is modified to Glycine amide.

This sequence belongs to the GnRH family.

It localises to the secreted. Functionally, stimulates the secretion of gonadotropins; it stimulates the secretion of both luteinizing and follicle-stimulating hormones. This chain is Progonadoliberin-1 (GNRH1), found in Tupaia belangeri (Common tree shrew).